The sequence spans 314 residues: Small glutamine-rich tetratricopeptide repeat-containing protein alpha (314 aa).

The disordered stretch occupies residues 65-99; that stretch reads ATASKEMPQDPRGPDRTPPSEEDSAEAERLKTEGN. The segment covering 71–83 has biased composition (basic and acidic residues); the sequence is MPQDPRGPDRTPP. Residue threonine 81 is modified to Phosphothreonine. Serine 84 bears the Phosphoserine mark. Over residues 90 to 99 the composition is skewed to basic and acidic residues; the sequence is EAERLKTEGN. TPR repeat units lie at residues 91-124, 125-158, and 159-192; these read AERLKTEGNEQMKLENFEAAVHLYGKAIELNPAN, AVYFCNRAAAYSKLGNYVGAVQDCERAIGIDPGY, and SKAYGRMGLALSSLNKHAEAVAYYKKALELDPDN. Lysine 137 bears the N6-acetyllysine mark. A disordered region spans residues 249–268; the sequence is GMISGGHNPLGTPGSSPQHS. Serine 302 is modified (phosphoserine). At threonine 304 the chain carries Phosphothreonine. A Phosphoserine modification is found at serine 306.

The protein belongs to the SGT family. As to quaternary structure, homodimer. Homooligomer. Interacts with DNAJC5 and DNAJC5B. Interacts (via TPR repeats) with HSP90AA1. Interacts (via Gln-rich region) with SLC2A1. Interacts with HSP90AB1. Interacts (via TPR repeats) with HSPA8/Hsc70; the interaction is direct. Interacts with BAG6 (via ubiquitin-like domain); interaction prevents interaction between BAG6 and RNF126. Forms a multiprotein complex, at least composed of DNAJB12, DNAJB14, HSPA8/Hsc70 and SGTA; interaction with DNAJB14 and HSPA8/Hsc70 is direct. In terms of assembly, (Microbial infection) Interacts with NS1 from parvovirus H-1. Ubiquitously expressed.

It localises to the cytoplasm. It is found in the nucleus. Functionally, co-chaperone that binds misfolded and hydrophobic patches-containing client proteins in the cytosol. Mediates their targeting to the endoplasmic reticulum but also regulates their sorting to the proteasome when targeting fails. Functions in tail-anchored/type II transmembrane proteins membrane insertion constituting with ASNA1 and the BAG6 complex a targeting module. Functions upstream of the BAG6 complex and ASNA1, binding more rapidly the transmembrane domain of newly synthesized proteins. It is also involved in the regulation of the endoplasmic reticulum-associated misfolded protein catabolic process via its interaction with BAG6: collaborates with the BAG6 complex to maintain hydrophobic substrates in non-ubiquitinated states. Competes with RNF126 for interaction with BAG6, preventing the ubiquitination of client proteins associated with the BAG6 complex. Binds directly to HSC70 and HSP70 and regulates their ATPase activity. In Rattus norvegicus (Rat), this protein is Small glutamine-rich tetratricopeptide repeat-containing protein alpha (Sgta).